The chain runs to 185 residues: Probable E3 ubiquitin-protein ligase ATL44 (185 aa).

The chain crosses the membrane as a helical span at residues 29 to 49 (VVILSALLCALICVAGLAAVV). The RING-type; atypical zinc-finger motif lies at 102–144 (CAICLTDFADGEEIRVLPLCGHSFHVECIDKWLVSRSSCPSCR). The tract at residues 163–185 (MKDQAHRHQHHQHSSTTIPTFLP) is disordered. The span at 176-185 (SSTTIPTFLP) shows a compositional bias: polar residues.

This sequence belongs to the RING-type zinc finger family. ATL subfamily. Interacts with BIK1. In terms of processing, auto-monoubiquitination. Expressed in stems, flowers and green siliques.

The protein resides in the membrane. The catalysed reaction is S-ubiquitinyl-[E2 ubiquitin-conjugating enzyme]-L-cysteine + [acceptor protein]-L-lysine = [E2 ubiquitin-conjugating enzyme]-L-cysteine + N(6)-ubiquitinyl-[acceptor protein]-L-lysine.. It functions in the pathway protein modification; protein ubiquitination. Its function is as follows. E3 ubiquitin-protein ligase that possess E3 ubiquitin ligase activity in vitro and mediates protein monoubiquitination. Triggers the monoubiquitination of phosphorylated BIK1 in response to pathogen-associated molecular pattern (PAMP) detection. This chain is Probable E3 ubiquitin-protein ligase ATL44, found in Arabidopsis thaliana (Mouse-ear cress).